Reading from the N-terminus, the 751-residue chain is Semaphorin-3C (751 aa).

An N-terminal signal peptide occupies residues 1-20 (MAFRTICVLVGVFICSICVK). In terms of domain architecture, Sema spans 28-511 (RVYLTFDELR…SNEGVSQVSL (484 aa)). N-linked (GlcNAc...) asparagine glycosylation is present at Asn81. Cys101 and Cys112 form a disulfide bridge. An N-linked (GlcNAc...) asparagine glycan is attached at Asn123. The cysteines at positions 130 and 139 are disulfide-linked. 2 N-linked (GlcNAc...) asparagine glycosylation sites follow: Asn252 and Asn268. 2 disulfides stabilise this stretch: Cys266/Cys378 and Cys290/Cys338. N-linked (GlcNAc...) asparagine glycosylation occurs at Asn465. The cysteines at positions 514 and 532 are disulfide-linked. An Ig-like C2-type domain is found at 571–655 (AYRNAAEIVQ…TENSFKQTIA (85 aa)). 2 N-linked (GlcNAc...) asparagine glycosylation sites follow: Asn585 and Asn586. Residues Cys643 and Cys709 are joined by a disulfide bond. A compositionally biased stretch (basic and acidic residues) spans 712–731 (TRQQHQQGDESQKMRGDYGK). The disordered stretch occupies residues 712–751 (TRQQHQQGDESQKMRGDYGKLKALINSRKSRNRRNQLPES).

The protein belongs to the semaphorin family. Interacts with PLXND1. Expressed intensely in the heart, skeletal muscle, colon, small intestine, ovary, testis, and prostate. Faint expression ubiquitously among other organs, including brain.

The protein localises to the secreted. Functionally, binds to plexin family members and plays an important role in the regulation of developmental processes. Required for normal cardiovascular development during embryogenesis. Functions as attractant for growing axons, and thereby plays an important role in axon growth and axon guidance. In Homo sapiens (Human), this protein is Semaphorin-3C (SEMA3C).